A 317-amino-acid chain; its full sequence is Ribosomal protein L11 methyltransferase (317 aa).

T158, G179, D201, and N244 together coordinate S-adenosyl-L-methionine.

Belongs to the methyltransferase superfamily. PrmA family.

The protein localises to the cytoplasm. The catalysed reaction is L-lysyl-[protein] + 3 S-adenosyl-L-methionine = N(6),N(6),N(6)-trimethyl-L-lysyl-[protein] + 3 S-adenosyl-L-homocysteine + 3 H(+). Methylates ribosomal protein L11. The protein is Ribosomal protein L11 methyltransferase of Lactococcus lactis subsp. cremoris (strain MG1363).